The primary structure comprises 118 residues: Large ribosomal subunit protein bL20 (118 aa).

Belongs to the bacterial ribosomal protein bL20 family.

Functionally, binds directly to 23S ribosomal RNA and is necessary for the in vitro assembly process of the 50S ribosomal subunit. It is not involved in the protein synthesizing functions of that subunit. This chain is Large ribosomal subunit protein bL20, found in Edwardsiella ictaluri (strain 93-146).